The chain runs to 83 residues: NAD(P)H-quinone oxidoreductase subunit L (83 aa).

Helical transmembrane passes span 15 to 35 (LLVL…VPLA) and 53 to 73 (LGIY…APFL).

Belongs to the complex I NdhL subunit family. In terms of assembly, NDH-1 can be composed of about 15 different subunits; different subcomplexes with different compositions have been identified which probably have different functions.

The protein localises to the cellular thylakoid membrane. It catalyses the reaction a plastoquinone + NADH + (n+1) H(+)(in) = a plastoquinol + NAD(+) + n H(+)(out). The catalysed reaction is a plastoquinone + NADPH + (n+1) H(+)(in) = a plastoquinol + NADP(+) + n H(+)(out). Functionally, NDH-1 shuttles electrons from an unknown electron donor, via FMN and iron-sulfur (Fe-S) centers, to quinones in the respiratory and/or the photosynthetic chain. The immediate electron acceptor for the enzyme in this species is believed to be plastoquinone. Couples the redox reaction to proton translocation, and thus conserves the redox energy in a proton gradient. Cyanobacterial NDH-1 also plays a role in inorganic carbon-concentration. The sequence is that of NAD(P)H-quinone oxidoreductase subunit L from Synechococcus sp. (strain CC9605).